Consider the following 48-residue polypeptide: Gas vesicle protein A (48 aa).

This sequence belongs to the gas vesicle GvpA family. As to quaternary structure, the gas vesicle shell is 2 nm thick and consists of a single layer of this protein. It forms helical ribs nearly perpendicular to the long axis of the vesicle.

The protein localises to the gas vesicle shell. Gas vesicles are hollow, gas filled proteinaceous nanostructures found in some microorganisms. During planktonic growth they allow positioning of the organism at a favorable depth for light or nutrient acquisition. GvpA forms the protein shell. This Spirulina sp. (strain CCAP 1475/10) protein is Gas vesicle protein A.